We begin with the raw amino-acid sequence, 410 residues long: Putative competence-damage inducible protein (410 aa).

This sequence belongs to the CinA family.

This is Putative competence-damage inducible protein from Finegoldia magna (strain ATCC 29328 / DSM 20472 / WAL 2508) (Peptostreptococcus magnus).